Reading from the N-terminus, the 380-residue chain is Putative 8-amino-7-oxononanoate synthase (380 aa).

Residue Arg-18 participates in substrate binding. Pyridoxal 5'-phosphate is bound at residue Gly-106–Tyr-107. His-131 contributes to the substrate binding site. Residues Ser-179, Asp-205–His-208, and Thr-236–Lys-239 each bind pyridoxal 5'-phosphate. Lys-239 bears the N6-(pyridoxal phosphate)lysine mark. Thr-352 is a binding site for substrate.

It belongs to the class-II pyridoxal-phosphate-dependent aminotransferase family. BioF subfamily. As to quaternary structure, homodimer. The cofactor is pyridoxal 5'-phosphate.

The enzyme catalyses 6-carboxyhexanoyl-[ACP] + L-alanine + H(+) = (8S)-8-amino-7-oxononanoate + holo-[ACP] + CO2. It participates in cofactor biosynthesis; biotin biosynthesis. Catalyzes the decarboxylative condensation of pimeloyl-[acyl-carrier protein] and L-alanine to produce 8-amino-7-oxononanoate (AON), [acyl-carrier protein], and carbon dioxide. In Neisseria meningitidis serogroup B (strain ATCC BAA-335 / MC58), this protein is Putative 8-amino-7-oxononanoate synthase (bioF).